The following is a 127-amino-acid chain: Transcription initiation factor IIA subunit 2 (127 aa).

Belongs to the TFIIA subunit 2 family. As to quaternary structure, TFIIA is a heterodimer composed of the large TOA1 and the small TOA2 subunits.

The protein localises to the nucleus. TFIIA is a component of the transcription machinery of RNA polymerase II and plays an important role in transcriptional activation. TFIIA in a complex with tbp mediates transcriptional activity. This Cryptococcus neoformans var. neoformans serotype D (strain B-3501A) (Filobasidiella neoformans) protein is Transcription initiation factor IIA subunit 2 (TOA2).